Reading from the N-terminus, the 76-residue chain is Large ribosomal subunit protein bL31 (76 aa).

Residues C16, C18, C37, and C40 each coordinate Zn(2+).

The protein belongs to the bacterial ribosomal protein bL31 family. Type A subfamily. As to quaternary structure, part of the 50S ribosomal subunit. Zn(2+) serves as cofactor.

In terms of biological role, binds the 23S rRNA. This Solibacter usitatus (strain Ellin6076) protein is Large ribosomal subunit protein bL31.